We begin with the raw amino-acid sequence, 719 residues long: Penicillin-binding protein 1A (719 aa).

The tract at residues 62 to 223 (LIADLGSERR…NQYDPYSHPE (162 aa)) is transglycosylase. The active-site Proton donor; for transglycosylase activity is Glu-91. Positions 297-611 (DVYTNVDQEA…RLTPLVGNGL (315 aa)) are transpeptidase. Catalysis depends on Ser-370, which acts as the Acyl-ester intermediate; for transpeptidase activity. The disordered stretch occupies residues 652 to 719 (ARSTWSSPAP…QNQNPQPAQP (68 aa)). Residues 654–719 (STWSSPAPQQ…QNQNPQPAQP (66 aa)) are compositionally biased toward low complexity.

The protein in the N-terminal section; belongs to the glycosyltransferase 51 family. It in the C-terminal section; belongs to the transpeptidase family. As to quaternary structure, interacts with MreC in the elongasome.

It is found in the secreted. The catalysed reaction is [GlcNAc-(1-&gt;4)-Mur2Ac(oyl-L-Ala-gamma-D-Glu-L-Lys-D-Ala-D-Ala)](n)-di-trans,octa-cis-undecaprenyl diphosphate + beta-D-GlcNAc-(1-&gt;4)-Mur2Ac(oyl-L-Ala-gamma-D-Glu-L-Lys-D-Ala-D-Ala)-di-trans,octa-cis-undecaprenyl diphosphate = [GlcNAc-(1-&gt;4)-Mur2Ac(oyl-L-Ala-gamma-D-Glu-L-Lys-D-Ala-D-Ala)](n+1)-di-trans,octa-cis-undecaprenyl diphosphate + di-trans,octa-cis-undecaprenyl diphosphate + H(+). It carries out the reaction Preferential cleavage: (Ac)2-L-Lys-D-Ala-|-D-Ala. Also transpeptidation of peptidyl-alanyl moieties that are N-acyl substituents of D-alanine.. It participates in cell wall biogenesis; peptidoglycan biosynthesis. Its function is as follows. Cell wall formation. The polypeptide is Penicillin-binding protein 1A (pbpA) (Streptococcus pneumoniae (strain ATCC BAA-255 / R6)).